Reading from the N-terminus, the 452-residue chain is Keratin, type I cytoskeletal 15 (452 aa).

Residues 1-97 (MATTFLQTSS…GGDGGLLSGN (97 aa)) form a head region. 5 positions are modified to phosphoserine: Ser15, Ser16, Ser28, Ser33, and Ser47. The interval 98–133 (EKVTMQNLNDRLASYLDKVRALEQANTELEVKIRDW) is coil 1A. Residues 98 to 410 (EKVTMQNLND…NLLEGQDAKM (313 aa)) form the IF rod domain. At Thr124 the chain carries Phosphothreonine. Residues 134-152 (YQKQSPASPDRDYSHYFKT) form a linker 1 region. A coil 1B region spans residues 153-244 (MEEIRDKILA…KNHEEEMKEF (92 aa)). Positions 245–264 (SSQLAGQVNVEMDAAPGVDL) are linker 12. A coil 2 region spans residues 265 to 406 (TRMLAEMREQ…ATYRNLLEGQ (142 aa)). Lys293 is covalently cross-linked (Glycyl lysine isopeptide (Lys-Gly) (interchain with G-Cter in SUMO2)). 2 positions are modified to phosphothreonine: Thr294 and Thr316. The tail stretch occupies residues 407 to 452 (DAKMAGIGVREGSSGGGGSSSSSSNFHISVEESVDGKVVSSRKREI). The interval 413–452 (IGVREGSSGGGGSSSSSSNFHISVEESVDGKVVSSRKREI) is disordered. Lys443 participates in a covalent cross-link: Glycyl lysine isopeptide (Lys-Gly) (interchain with G-Cter in SUMO1); alternate. Residue Lys443 forms a Glycyl lysine isopeptide (Lys-Gly) (interchain with G-Cter in SUMO2); alternate linkage.

It belongs to the intermediate filament family. As to quaternary structure, heterotetramer of two type I and two type II keratins. Forms a heterodimer with KRT14. Interacts with PLEC isoform 1C, when in a heterodimer with KRT14. Interacts with NOD2. In terms of tissue distribution, expressed strongly in the basal cell layer at the tips of rete-like prominences (RLPs) of adult dorsal tongue, outer root sheath (ORS) of hair follicle and skin epidermis (at protein level).

Functionally, in the absence of KRT14, makes a bona fide, but ultrastructurally distinct keratin filament network with KRT5. This chain is Keratin, type I cytoskeletal 15 (Krt15), found in Mus musculus (Mouse).